A 446-amino-acid chain; its full sequence is Indoleacetamide hydrolase (446 aa).

Catalysis depends on charge relay system residues Lys71 and Ser146. Ser170 functions as the Acyl-ester intermediate in the catalytic mechanism.

Belongs to the amidase family.

Its pathway is plant hormone metabolism; auxin biosynthesis. Hydrolyzes indole-3-acetamide (IAM) into indole-3-acetic acid (IAA). This chain is Indoleacetamide hydrolase (iaaH), found in Pseudomonas syringae pv. syringae.